The chain runs to 675 residues: MPGKEENDTLEKSLKELNLTSDEMTKFEKAFKDPEFIKLFEEYAKEVSDPKVKAETDAYLRQIEQQGRAEDVYGAGTQLIVPDPAGAVIKTKVVSSSASKKQQQEQEKQEKEQQQQAAGAGKPEGPGKQGALPVGQKVFINICTCDKLERYSLTDAQDPATGRLRPKLTIPLSLGPVRQGADKQGAPAAVYDFVVHPDSWTFAAGNAAGLATLADTALDHVEQVGRCRLVRAWKRLNCRYKGTEGAAEPPVQCIRTSAAAAAGAAGEGAGGRVRPRPDVPGVPDLPGAKTAPPAAAGAAATAAAAAGAAEGGAGSSSRSTFSFDKSRKAGGTEAAGAVAKQEATITDPARPGYRHPDGAVTPEWGLLHRGEADLGEAWGDAGKGLAAGGRVPKELVVRVTLPDVSSAAPVDLDVGARCLALTVPNRYRLSVQLPYGVDDAKGRAKFDKARKVLEVTLPVVPPPAPPPGAAAAARAGLALIQELGGSEEAAEVKAEVEVEVADVMGRDQEAAHAKSEAGAGAGVKSPHTAAAASSGAAPAPAAASEEEEEEDKEDGGPAAGSGGDPAAAAAAAGASSGRELTENERKWRELHARQQQEEQEQQEAAEAAAAAAAAAAEPSSRSQLTGTVAQGGAAAAAESVAAAKQQVQQQPVAAAAAPTAVLRPRLNRELAMELD.

4 disordered regions span residues 98 to 131, 265 to 293, 310 to 340, and 509 to 659; these read ASKK…KQGA, AGEG…TAPP, EGGA…AVAK, and EAAH…AAPT. The span at 102-113 shows a compositional bias: basic and acidic residues; it reads QQQEQEKQEKEQ. Low complexity predominate over residues 279–293; it reads VPGVPDLPGAKTAPP. The segment covering 529–543 has biased composition (low complexity); the sequence is AAAASSGAAPAPAAA. Positions 544–553 are enriched in acidic residues; that stretch reads SEEEEEEDKE. Over residues 564-577 the composition is skewed to low complexity; it reads DPAAAAAAAGASSG. Residues 579–596 show a composition bias toward basic and acidic residues; the sequence is ELTENERKWRELHARQQQ. 2 stretches are compositionally biased toward low complexity: residues 604–617 and 628–659; these read AAEA…AAAE and VAQG…AAPT.

The protein belongs to the PIH1 family. Kintoun subfamily.

The protein resides in the cytoplasm. Functionally, required for cytoplasmic pre-assembly of axonemal dyneins, thereby playing a central role in motility in cilia and flagella. Involved in pre-assembly of dynein arm complexes in the cytoplasm before intraflagellar transport loads them for the ciliary compartment. The protein is Protein kintoun (pf13) of Chlamydomonas reinhardtii (Chlamydomonas smithii).